A 314-amino-acid polypeptide reads, in one-letter code: uncharacterized protein (314 aa).

10 helical membrane-spanning segments follow: residues Phe4 to Gly23, Phe36 to Ile53, Thr68 to Phe90, Ala97 to Val116, Val131 to Ser153, Pro174 to Trp196, Phe200 to His222, Glu229 to Ala251, Met261 to Val283, and Ala290 to Val309.

The protein belongs to the auxin efflux carrier (TC 2.A.69) family.

Its subcellular location is the cell membrane. This is an uncharacterized protein from Escherichia coli O157:H7.